Here is a 474-residue protein sequence, read N- to C-terminus: Poly(A) polymerase catalytic subunit (474 aa).

Residues Asp193 and Asp195 contribute to the active site.

Belongs to the poxviridae poly(A) polymerase catalytic subunit family. Heterodimer of a large (catalytic) subunit and a small (regulatory) subunit.

It catalyses the reaction RNA(n) + ATP = RNA(n)-3'-adenine ribonucleotide + diphosphate. Functionally, polymerase that creates the 3'-poly(A) tail of mRNA's. The chain is Poly(A) polymerase catalytic subunit (PAPL) from Bos taurus (Bovine).